A 296-amino-acid polypeptide reads, in one-letter code: Sulfotransferase 1C2 (296 aa).

49–54 contacts 3'-phosphoadenylyl sulfate; the sequence is KSGTTW. A substrate-binding site is contributed by 107 to 109; the sequence is RTH. His-109 functions as the Proton acceptor in the catalytic mechanism. 3'-phosphoadenylyl sulfate contacts are provided by residues Arg-131, Ser-139, Tyr-194, and 228–233; that span reads TSFEKM. Phosphoserine is present on Ser-139. Ser-254 carries the phosphoserine modification. 3'-phosphoadenylyl sulfate is bound at residue 256 to 260; that stretch reads FMRKG.

Belongs to the sulfotransferase 1 family. As to expression, highly expressed in kidney and at lower levels in stomach and liver. More specifically found in the epithelia of proximal tubules of the kidney, of the bile duct, of the gastric mucosa, and in hepatocytes.

It is found in the cytoplasm. The protein resides in the lysosome. Its subcellular location is the mitochondrion. The catalysed reaction is a phenol + 3'-phosphoadenylyl sulfate = an aryl sulfate + adenosine 3',5'-bisphosphate + H(+). The enzyme catalyses cholesterol + 3'-phosphoadenylyl sulfate = cholesterol sulfate + adenosine 3',5'-bisphosphate + H(+). In terms of biological role, sulfotransferase that utilizes 3'-phospho-5'-adenylyl sulfate (PAPS) to catalyze the sulfate conjugation of phenolic compounds. Does not transfer sulfate to steroids, dopamine, acetaminophen, or alpha-naphthol. Except in mitochondria, where it can add sulfate to cholesterol producing cholesterol sulfate, which alters mitochondrial membrane organization, and impacts protein complex mobility increasing state-III respiration, thereby modulating mitochondrial respiration. Catalyzes the sulfation of the carcinogenic N-hydroxy-2-acetylaminofluorene leading to highly reactive intermediates capable of forming DNA adducts, potentially resulting in mutagenesis. The protein is Sulfotransferase 1C2 (Sult1c2) of Rattus norvegicus (Rat).